The sequence spans 575 residues: MPLSDNLNLLWSSLIVAELVKNGLDTFFISPGNRNAPLISALIHEERSVKKICVDERAAGYRALGHAKAAGRPGVLVCTSGTAPANYYPAVIEAFRDEIPLVILSADRPPELIGSDANQTIVQPDLYGRYCRDSLLIPCPSADYPLEALLARIDSLIARPVGPVHINCAFRDPLVPGIPDSRPIPDELLATAGRLYAREGAYTTYPSPGTLHTGLEDVEAILNRTARGLIVIGRLDGPRDAPALEELAKKLGWPVFCDIASSMKGRIPSDRQIFSLDHPEALRLVSAYAPETILQFGSGLVSKHYFASLLPHSEATVIQISPRAGLRDPAHRVNVRLSMPAFAFVEGLHLQENPSLDATACCLFLDSLETLYQALQRRIPEETLSFSRIASDLLGAVPDGEGLFLGNSLVIRAFDKFRSPFPRKISVISNRGVSGIEGNIATSVGFAEASRRRVTAVIGDISFLHDLNSLLLLAQSATPVVLIIINNGGGRIFERLPIRDFPEILEPYMTTPHGMTFDLLAAQFDLPYFRAATPDELRKAYESALDAERSAVLEVTLDPEEDLRTFQTFQNVRLP.

The protein belongs to the TPP enzyme family. MenD subfamily. Homodimer. Mg(2+) serves as cofactor. Mn(2+) is required as a cofactor. The cofactor is thiamine diphosphate.

The catalysed reaction is isochorismate + 2-oxoglutarate + H(+) = 5-enolpyruvoyl-6-hydroxy-2-succinyl-cyclohex-3-ene-1-carboxylate + CO2. It functions in the pathway quinol/quinone metabolism; 1,4-dihydroxy-2-naphthoate biosynthesis; 1,4-dihydroxy-2-naphthoate from chorismate: step 2/7. The protein operates within quinol/quinone metabolism; menaquinone biosynthesis. Its function is as follows. Catalyzes the thiamine diphosphate-dependent decarboxylation of 2-oxoglutarate and the subsequent addition of the resulting succinic semialdehyde-thiamine pyrophosphate anion to isochorismate to yield 2-succinyl-5-enolpyruvyl-6-hydroxy-3-cyclohexene-1-carboxylate (SEPHCHC). The chain is 2-succinyl-5-enolpyruvyl-6-hydroxy-3-cyclohexene-1-carboxylate synthase from Syntrophus aciditrophicus (strain SB).